A 562-amino-acid chain; its full sequence is Protein FAM222B (562 aa).

Composition is skewed to low complexity over residues 147–167 and 183–201; these read PQAQALARQQALQHAQTLAHA and ALSHPQSLQQPQGLGHPQQ. Disordered stretches follow at residues 147-242 and 537-562; these read PQAQ…PPNV and AHRAPGTRAPDPTDSRSLHIQHPGYR.

Belongs to the FAM222 family.

The protein is Protein FAM222B (Fam222b) of Mus musculus (Mouse).